The following is a 165-amino-acid chain: Small ribosomal subunit protein uS5 (165 aa).

Positions 10–73 (LVEKLVSVDR…EAAKRNMITV (64 aa)) constitute an S5 DRBM domain.

This sequence belongs to the universal ribosomal protein uS5 family. Part of the 30S ribosomal subunit. Contacts proteins S4 and S8.

Functionally, with S4 and S12 plays an important role in translational accuracy. Located at the back of the 30S subunit body where it stabilizes the conformation of the head with respect to the body. The sequence is that of Small ribosomal subunit protein uS5 from Psychrobacter sp. (strain PRwf-1).